The following is a 145-amino-acid chain: MIALIQRVLNASVTVEGQTVGNIGPGLLVLLGVEQDDNEQKAVRLCERVLGYRIFGDENDKMNLNVQQAGGSLLVVSQFTLVADTQKGMRPSFSRGAVPQEADRLYQYFVGQCRERGIETQTGEFAADMKVALVNDGPVTFWLQV.

The Gly-cisPro motif, important for rejection of L-amino acids signature appears at 137-138 (GP).

It belongs to the DTD family. Homodimer.

It is found in the cytoplasm. It catalyses the reaction glycyl-tRNA(Ala) + H2O = tRNA(Ala) + glycine + H(+). It carries out the reaction a D-aminoacyl-tRNA + H2O = a tRNA + a D-alpha-amino acid + H(+). Functionally, an aminoacyl-tRNA editing enzyme that deacylates mischarged D-aminoacyl-tRNAs. Also deacylates mischarged glycyl-tRNA(Ala), protecting cells against glycine mischarging by AlaRS. Acts via tRNA-based rather than protein-based catalysis; rejects L-amino acids rather than detecting D-amino acids in the active site. By recycling D-aminoacyl-tRNA to D-amino acids and free tRNA molecules, this enzyme counteracts the toxicity associated with the formation of D-aminoacyl-tRNA entities in vivo and helps enforce protein L-homochirality. This chain is D-aminoacyl-tRNA deacylase, found in Serratia proteamaculans (strain 568).